The sequence spans 367 residues: MEANGLGPQGFPELKNDTFLRAAWGEETDYTPVWCMRQAGRYLPEFRETRAAQDFFSTCRSPEACCELTLQPLRRFPLDAAIIFSDILVVPQALGMEVTMVPGKGPSFPEPLREEQDLERLRDPEVVASELGYVFQAITLTRQRLAGRVPLIGFAGAPWTLMTYMVEGGGSSTMAQAKRWLYQRPQASHQLLRILTDALVPYLVGQVVAGAQALQLFESHAGHLGPQLFNKFALPYIRDVAKQVKARLREAGLAPVPMIIFAKDGHFALEELAQAGYEVVGLDWTVAPKKARECVGKTVTLQGNLDPCALYASEEEIGQLVKQMLDDFGPHRYIANLGHGLYPDMDPEHVGAFVDAVHKHSRLLRQN.

At Met-1 the chain carries N-acetylmethionine. 8 residues coordinate coproporphyrinogen I: Arg-37, Ala-39, Arg-41, Arg-50, Asp-86, Tyr-164, Ser-219, and His-339. Coproporphyrinogen III-binding residues include Arg-37, Ala-39, and Arg-41. Positions 86, 164, 219, and 339 each coordinate coproporphyrinogen III.

This sequence belongs to the uroporphyrinogen decarboxylase family. As to quaternary structure, homodimer.

Its subcellular location is the cytoplasm. The protein localises to the cytosol. It catalyses the reaction uroporphyrinogen III + 4 H(+) = coproporphyrinogen III + 4 CO2. The catalysed reaction is uroporphyrinogen I + 4 H(+) = coproporphyrinogen I + 4 CO2. Its pathway is porphyrin-containing compound metabolism; protoporphyrin-IX biosynthesis; coproporphyrinogen-III from 5-aminolevulinate: step 4/4. Catalyzes the sequential decarboxylation of the four acetate side chains of uroporphyrinogen to form coproporphyrinogen and participates in the fifth step in the heme biosynthetic pathway. Isomer I or isomer III of uroporphyrinogen may serve as substrate, but only coproporphyrinogen III can ultimately be converted to heme. In vitro also decarboxylates pentacarboxylate porphyrinogen I. The chain is Uroporphyrinogen decarboxylase from Homo sapiens (Human).